The chain runs to 1188 residues: Oxysterol-binding protein homolog 1 (1188 aa).

ANK repeat units lie at residues 51 to 80, 96 to 125, and 196 to 225; these read VLHL…STTN, NGNT…INDC, and TGDT…DPFK. Residues 330–379 enclose the PH domain; it reads MSSCSLHLDSSEKLKFEIIGGNNGVIRWHLKGNHPIETNRWVWAIQGAIR. Serine 394 carries the post-translational modification Phosphoserine. 2 disordered regions span residues 415 to 546 and 661 to 692; these read ATSK…GDED and QKKL…QEST. The segment covering 424–433 has biased composition (polar residues); it reads PHLSKSTLTQ. A compositionally biased stretch (low complexity) spans 443-462; that stretch reads TNNNNNKSNNDYDDNNNNNN. Residues 463–473 show a composition bias toward acidic residues; that stretch reads NDDDDYDDDDE. Phosphoserine occurs at positions 490 and 500. Over residues 514-529 the composition is skewed to acidic residues; the sequence is PSDDEGYSEDDSDDDG. Phosphoserine is present on residues serine 678, serine 683, and serine 691. Residues threonine 692 and threonine 694 each carry the phosphothreonine modification. A phosphoserine mark is found at serine 708 and serine 712. Positions 716–722 match the FFAT motif; it reads EFFDAEE. Residues 721 to 755 form a disordered region; the sequence is EEAASDKKANDSEDLTTNKETPANAKPQEEAPEDE. The interval 800-1174 is OSBP-related domain (ORD); it reads LWSVLKSMVG…YWKFNGEYWN (375 aa). 2 residues coordinate ergosterol: aspartate 834 and lysine 962.

This sequence belongs to the OSBP family. In terms of assembly, interacts with NVJ1. Interacts with the AAA ATPase AFG2; regulates OSH1 membrane association. AFG2 is required for membrane dissociation of OSH1. Interacts with SCS2.

Its subcellular location is the golgi apparatus membrane. The protein resides in the nucleus outer membrane. It is found in the endoplasmic reticulum membrane. It localises to the vacuole membrane. Functionally, lipid transport protein (LTP) involved in non-vesicular transfer of lipids between membranes. Functions in phosphoinositide-coupled directional transport of various lipids by carrying the lipid molecule in a hydrophobic pocket and transferring it between membranes through the cytosol. Involved in maintenance of intracellular sterol distribution and homeostasis. Involved in non-vesicular transport of ergosterol and PI(4)P at the NVJ. Binds sterol and PI4P in a mutually exclusive manner. May be involved in formation of PMN vesicles by altering the membrane lipid composition. In Saccharomyces cerevisiae (strain ATCC 204508 / S288c) (Baker's yeast), this protein is Oxysterol-binding protein homolog 1.